Reading from the N-terminus, the 152-residue chain is Isoquinoline 1-oxidoreductase subunit alpha (152 aa).

The 77-residue stretch at 1-77 (MIEFILNGQP…RQSVTTIEGL (77 aa)) folds into the 2Fe-2S ferredoxin-type domain. Residues Cys-39, Cys-44, and Cys-47 each contribute to the [2Fe-2S] cluster site.

Heterodimer of an alpha chain and a beta chain.

The catalysed reaction is isoquinoline + A + H2O = isoquinolin-1(2H)-one + AH2. Functionally, specific towards N-containing N-heterocyclic substrates, including isoquinoline, isoquinolin-5-ol, phthalazine and quinazoline. The chain is Isoquinoline 1-oxidoreductase subunit alpha (iorA) from Brevundimonas diminuta (Pseudomonas diminuta).